Here is a 280-residue protein sequence, read N- to C-terminus: Nitrogenase iron-iron protein alpha chain (280 aa).

Residues C5, C31, and C94 each contribute to the [8Fe-7S] cluster site. Residue C213 coordinates [8Fe-9S-C-homocitryl] cluster.

This sequence belongs to the NifD/NifK/NifE/NifN family. Hexamer of two alpha, two beta, and two delta chains. Requires [8Fe-7S] cluster as cofactor. [8Fe-9S-C-homocitryl] cluster serves as cofactor.

It catalyses the reaction N2 + 8 reduced [2Fe-2S]-[ferredoxin] + 16 ATP + 16 H2O = H2 + 8 oxidized [2Fe-2S]-[ferredoxin] + 2 NH4(+) + 16 ADP + 16 phosphate + 6 H(+). Its function is as follows. This iron-iron protein is part of the nitrogenase complex that catalyzes the key enzymatic reactions in nitrogen fixation. Other nitrogenase complexes utilize a molybdenum-iron protein or a vanadium-iron protein. This Heliomicrobium gestii (Heliobacterium gestii) protein is Nitrogenase iron-iron protein alpha chain (anfD).